An 898-amino-acid polypeptide reads, in one-letter code: Metalloprotease StcE (898 aa).

The N-terminal stretch at 1-35 (MNTKMNERWRTPMKLKYLSCTILAPLAIGVFSATA) is a signal peptide. In terms of domain architecture, Peptidase M66 spans 296–551 (ELLLHTIDIG…QRFFENKAVF (256 aa)). H446 is a binding site for Zn(2+). E447 is a catalytic residue. Zn(2+) is bound by residues H450 and H456.

Zn(2+) serves as cofactor.

Its subcellular location is the secreted. Inhibited by divalent cation chelators such as BPS and EDTA. Functionally, virulence factor that contributes to intimate adherence of enterohemorrhagic E.coli (EHEC) O157:H7 to host cells. Is able to cleave the secreted human mucin 7 (MUC7) and the glycoprotein 340 (DMBT1/GP340). Also cleaves human C1 inhibitor (SERPING1), a regulator of multiple inflammatory pathways, and binds and localizes it to bacterial and host cell surfaces, protecting them from complement-mediated lysis. Therefore, the current model proposes two roles for StcE during infection: it acts first as a mucinase, allowing passage of EHEC through the oral cavity by cleaving the salivary glycoproteins that are responsible for bacterial aggregation. Similarly, in the colon, StcE cleaves the glycoproteins that protect the intestinal epithelial surface, allowing EHEC to come into close contact with host cell membranes. Secondly, it acts as an anti-inflammatory agent by localizing SERPING1 to cell membranes. This chain is Metalloprotease StcE (stcE), found in Escherichia coli O157:H7.